The sequence spans 215 residues: UPF0056 membrane protein bbp_248 (215 aa).

6 helical membrane passes run 10-32, 52-74, 78-100, 119-141, 151-169, and 190-207; these read IYIS…PIFT, FSVA…LFGI, SFRI…GNFI, ISIV…TIVW, IFGC…WTLF, and IMGL…LAGL.

The protein belongs to the UPF0056 (MarC) family.

It localises to the cell membrane. The chain is UPF0056 membrane protein bbp_248 from Buchnera aphidicola subsp. Baizongia pistaciae (strain Bp).